The primary structure comprises 256 residues: Thiazole synthase (256 aa).

Catalysis depends on lysine 96, which acts as the Schiff-base intermediate with DXP. 1-deoxy-D-xylulose 5-phosphate is bound by residues glycine 157, 184–185 (AG), and 206–207 (NT).

The protein belongs to the ThiG family. Homotetramer. Forms heterodimers with either ThiH or ThiS.

The protein resides in the cytoplasm. The catalysed reaction is [ThiS sulfur-carrier protein]-C-terminal-Gly-aminoethanethioate + 2-iminoacetate + 1-deoxy-D-xylulose 5-phosphate = [ThiS sulfur-carrier protein]-C-terminal Gly-Gly + 2-[(2R,5Z)-2-carboxy-4-methylthiazol-5(2H)-ylidene]ethyl phosphate + 2 H2O + H(+). It functions in the pathway cofactor biosynthesis; thiamine diphosphate biosynthesis. Catalyzes the rearrangement of 1-deoxy-D-xylulose 5-phosphate (DXP) to produce the thiazole phosphate moiety of thiamine. Sulfur is provided by the thiocarboxylate moiety of the carrier protein ThiS. In vitro, sulfur can be provided by H(2)S. In Brucella suis (strain ATCC 23445 / NCTC 10510), this protein is Thiazole synthase.